The chain runs to 117 residues: Large ribosomal subunit protein bL20c (117 aa).

Belongs to the bacterial ribosomal protein bL20 family.

The protein resides in the plastid. It localises to the chloroplast. Functionally, binds directly to 23S ribosomal RNA and is necessary for the in vitro assembly process of the 50S ribosomal subunit. It is not involved in the protein synthesizing functions of that subunit. This Ceratophyllum demersum (Rigid hornwort) protein is Large ribosomal subunit protein bL20c.